Here is a 577-residue protein sequence, read N- to C-terminus: Aspartate--tRNA(Asp/Asn) ligase (577 aa).

Glu-171 serves as a coordination point for L-aspartate. Residues 195 to 198 (QLFK) form an aspartate region. Arg-217 lines the L-aspartate pocket. ATP is bound by residues 217-219 (RDE) and Gln-226. His-444 provides a ligand contact to L-aspartate. Glu-474 contributes to the ATP binding site. Arg-481 provides a ligand contact to L-aspartate. 526-529 (GFDR) lines the ATP pocket.

The protein belongs to the class-II aminoacyl-tRNA synthetase family. Type 1 subfamily. Homodimer.

The protein localises to the cytoplasm. The catalysed reaction is tRNA(Asx) + L-aspartate + ATP = L-aspartyl-tRNA(Asx) + AMP + diphosphate. Its function is as follows. Aspartyl-tRNA synthetase with relaxed tRNA specificity since it is able to aspartylate not only its cognate tRNA(Asp) but also tRNA(Asn). Reaction proceeds in two steps: L-aspartate is first activated by ATP to form Asp-AMP and then transferred to the acceptor end of tRNA(Asp/Asn). This is Aspartate--tRNA(Asp/Asn) ligase from Helicobacter pylori (strain HPAG1).